Here is a 207-residue protein sequence, read N- to C-terminus: MAFLVRMLGRADYEPVWRAMQEFTGQRADDTADELWLVEHPPVYTLGMNGDPAHILDAGGVPVVRTDRGGQVTYHGPGQLVLYTLVDLQRRKLGVRRMVSALEQAVIGLLRQYGLEARARGDAPGVYVDGAKIASLGLRVRRGCCYHGVALNVCPELEAFDRIHPCGHAGLAVTRLTDLGVEAQVFEPAAALVRELMVQLGDEEIAA.

Positions 29-204 (DDTADELWLV…ELMVQLGDEE (176 aa)) constitute a BPL/LPL catalytic domain. Residues 68-75 (RGGQVTYH), 135-137 (SLG), and 148-150 (GVA) each bind substrate. C166 functions as the Acyl-thioester intermediate in the catalytic mechanism.

The protein belongs to the LipB family.

The protein localises to the cytoplasm. It catalyses the reaction octanoyl-[ACP] + L-lysyl-[protein] = N(6)-octanoyl-L-lysyl-[protein] + holo-[ACP] + H(+). Its pathway is protein modification; protein lipoylation via endogenous pathway; protein N(6)-(lipoyl)lysine from octanoyl-[acyl-carrier-protein]: step 1/2. Catalyzes the transfer of endogenously produced octanoic acid from octanoyl-acyl-carrier-protein onto the lipoyl domains of lipoate-dependent enzymes. Lipoyl-ACP can also act as a substrate although octanoyl-ACP is likely to be the physiological substrate. The sequence is that of Octanoyltransferase from Methylococcus capsulatus (strain ATCC 33009 / NCIMB 11132 / Bath).